The chain runs to 289 residues: Phosphate import ATP-binding protein PstB 2 (289 aa).

An ABC transporter domain is found at 37–276 (LHAKVEAFYY…HTPVIFQNPT (240 aa)). Position 69-76 (69-76 (GPSGCGKS)) interacts with ATP.

It belongs to the ABC transporter superfamily. Phosphate importer (TC 3.A.1.7) family. As to quaternary structure, the complex is composed of two ATP-binding proteins (PstB), two transmembrane proteins (PstC and PstA) and a solute-binding protein (PstS).

The protein resides in the cell inner membrane. The enzyme catalyses phosphate(out) + ATP + H2O = ADP + 2 phosphate(in) + H(+). In terms of biological role, part of the ABC transporter complex PstSACB involved in phosphate import. Responsible for energy coupling to the transport system. This chain is Phosphate import ATP-binding protein PstB 2, found in Trichormus variabilis (strain ATCC 29413 / PCC 7937) (Anabaena variabilis).